Here is a 945-residue protein sequence, read N- to C-terminus: Isoleucine--tRNA ligase 1 (945 aa).

The short motif at 66-76 (PYANGDIHLGH) is the 'HIGH' region element. Glu581 is an L-isoleucyl-5'-AMP binding site. The 'KMSKS' region signature appears at 622-626 (KMSKS). Lys625 serves as a coordination point for ATP. Cys908, Cys911, Cys928, and Cys931 together coordinate Zn(2+).

The protein belongs to the class-I aminoacyl-tRNA synthetase family. IleS type 1 subfamily. In terms of assembly, monomer. Requires Zn(2+) as cofactor.

Its subcellular location is the cytoplasm. It carries out the reaction tRNA(Ile) + L-isoleucine + ATP = L-isoleucyl-tRNA(Ile) + AMP + diphosphate. Its function is as follows. Catalyzes the attachment of isoleucine to tRNA(Ile). As IleRS can inadvertently accommodate and process structurally similar amino acids such as valine, to avoid such errors it has two additional distinct tRNA(Ile)-dependent editing activities. One activity is designated as 'pretransfer' editing and involves the hydrolysis of activated Val-AMP. The other activity is designated 'posttransfer' editing and involves deacylation of mischarged Val-tRNA(Ile). This is Isoleucine--tRNA ligase 1 from Burkholderia pseudomallei (strain K96243).